We begin with the raw amino-acid sequence, 530 residues long: Metal transporter Nramp2 (530 aa).

The disordered stretch occupies residues 1-35 (MENDVKENLEEEEDRLLPPPPPSQSLPSTDSESEA). A run of 12 helical transmembrane segments spans residues 68 to 88 (LWLF…PGNL), 96 to 116 (AIAG…GLLI), 153 to 173 (LALI…IQIL), 177 to 197 (FLPL…FLFL), 205 to 225 (LEAV…WMFG), 251 to 271 (AVGV…SALV), 297 to 317 (VALF…AKGF), 339 to 359 (FGGG…AAGQ), 395 to 415 (IVPT…LDVL), 418 to 438 (WLNV…LTLV), 456 to 476 (IAWT…LDFF), and 484 to 504 (LFGV…VYLI).

The protein belongs to the NRAMP (TC 2.A.55) family.

The protein localises to the membrane. Seems to be involved in iron uptake. The protein is Metal transporter Nramp2 (NRAMP2) of Arabidopsis thaliana (Mouse-ear cress).